Here is a 134-residue protein sequence, read N- to C-terminus: Small ribosomal subunit protein bS6 (134 aa).

Over residues 113–122 (NRDIKEKEQP) the composition is skewed to basic and acidic residues. Positions 113 to 134 (NRDIKEKEQPSESNVDADLKVN) are disordered.

It belongs to the bacterial ribosomal protein bS6 family.

Functionally, binds together with bS18 to 16S ribosomal RNA. In Borrelia duttonii (strain Ly), this protein is Small ribosomal subunit protein bS6.